A 518-amino-acid chain; its full sequence is Probable malate:quinone oxidoreductase (518 aa).

The disordered stretch occupies residues 495–518 (GAIPATTDGQSTAGTEHTPTAATV). Residues 501-518 (TDGQSTAGTEHTPTAATV) show a composition bias toward polar residues.

This sequence belongs to the MQO family. FAD serves as cofactor.

It carries out the reaction (S)-malate + a quinone = a quinol + oxaloacetate. The protein operates within carbohydrate metabolism; tricarboxylic acid cycle; oxaloacetate from (S)-malate (quinone route): step 1/1. This chain is Probable malate:quinone oxidoreductase, found in Mycolicibacterium gilvum (strain PYR-GCK) (Mycobacterium gilvum (strain PYR-GCK)).